Reading from the N-terminus, the 1085-residue chain is MAGKKSPRKSTINHSTHSGKLPANIKRLIKKGESDTKSRQSPPTLSTTRPRRFSLIYSSESSLSDVSDSDKNKSTNPHKIKRKAKNISNNSQGKKSKLIQRQIDNDDEGTESSDYQAVTDGEESENEEEESEEEEEDDDEDDDDDDDDGSDSDSDSETSSDDENIDFVKLTAQRKKRAMKALSAMNTNSNTLYSSRENSNKNKSVKLSPKKENEEEQKEEKEKEKEEQQKQQESNKKEVNGSGTTTTQQALSFKFKKEDDGISFGNGNEGYNEDIGEEVLDLKNKENNGNEEDKLDSKVMLGNNDELRFPNISESDESEYDIDQDAYFDVINNEDSHGEIGTDLETGEDDLPILEEEEQNIVSELQNDDELSFDGSIHEEGSDPVEDAENKFLQNEYNQENGYDEEDDEEDEIMSDFDMPFYEDPKFANLYYYGDGSEPKLSLSTSLPLMLNDEKLSKLKKKEAKKREQEERKQRRKLYKKTQKPSTRTTSNVDNDEYIFNVFFQSDDENSGHKSKKGRHKSGKSHIEHKNKGSNLIKSNDDLEPSTHSTVLNSGKYDSSDDEYDNILLDVAHMPSDDECSESETSHDADTDEELRALDSDSLDIGTELDDDYEDDDDDSSVTNVFIDIDDLDPDSFYFHYDSDGSSSLISSNSDKENSDGSKDCKHDLLETVVYVDDESTDEDDNLPPPSSRSKNIGSKAKEIVSSNVVGLRPPKLGTWETDNKPFSIIDGLSTKSLYALIQEHQQLREQHQRAQTPDVKREGSSNGNNGDELTLNELLNMSELEDDSPSHTDDMENNYNDAINSKSTNGHAADWYEVPKVPLSAFRNKGINAYEEDEYMIPANSNRKVPIGYIGNERTRKKIDKMKELQRKKTEKKRQLKKKKKLLKIRKQRQKAIKEQETMNLQLGINGHEIIGNNNSHSDINTGTDFTTNENTPMNELPSHAPEDASLIPHNSDLAVDSNTRKNSTKSVGLDEIHEILGKDENDLLSVGDINGYDAQEGHVIEDTDADILASLTAPVQFDNTLSHENSNSMWRRRQSMVEAAAENLRFTKNGLFSESALADIEGIMGNDVNHSFEFNDVLQ.

Disordered regions lie at residues 1-251, 283-302, 457-493, 507-622, 676-700, and 747-774; these read MAGK…QQAL, KNKE…VMLG, SKLK…TSNV, DDEN…DSSV, VDDE…IGSK, and QLRE…GDEL. Composition is skewed to polar residues over residues 9-18 and 39-48; these read KSTINHSTHS and RQSPPTLSTT. Residues 54–66 are compositionally biased toward low complexity; it reads SLIYSSESSLSDV. The span at 76–85 shows a compositional bias: basic residues; it reads NPHKIKRKAK. Positions 120–165 are enriched in acidic residues; it reads DGEESENEEEESEEEEEDDDEDDDDDDDDGSDSDSDSETSSDDENI. Polar residues predominate over residues 184–197; that stretch reads AMNTNSNTLYSSRE. S208 carries the post-translational modification Phosphoserine. A compositionally biased stretch (basic and acidic residues) spans 209 to 239; the sequence is PKKENEEEQKEEKEKEKEEQQKQQESNKKEV. Residues 241-251 show a composition bias toward polar residues; it reads GSGTTTTQQAL. Over residues 283–297 the composition is skewed to basic and acidic residues; the sequence is KNKENNGNEEDKLDS. The segment covering 474 to 483 has biased composition (basic residues); it reads QRRKLYKKTQ. The span at 484–493 shows a compositional bias: polar residues; it reads KPSTRTTSNV. Over residues 513-524 the composition is skewed to basic residues; the sequence is HKSKKGRHKSGK. Polar residues predominate over residues 546 to 557; the sequence is STHSTVLNSGKY. Residues 584 to 599 are compositionally biased toward basic and acidic residues; sequence ETSHDADTDEELRALD. Composition is skewed to acidic residues over residues 607–620 and 676–686; these read TELD…DDDS and VDDESTDEDDN. The segment covering 747–764 has biased composition (basic and acidic residues); it reads QLREQHQRAQTPDVKREG. The residue at position 1041 (S1041) is a Phosphoserine.

It belongs to the IFH1 family.

It localises to the nucleus. Its function is as follows. Transcriptional coactivator that together with FHL1 regulates the expression of rRNA and ribosomal protein genes. Its activity is negatively regulated by environmental stress. The sequence is that of Protein IFH1 (IFH1) from Saccharomyces cerevisiae (strain ATCC 204508 / S288c) (Baker's yeast).